The following is a 537-amino-acid chain: Cytochrome P450 monooxygenase AOL_s00215g282 (537 aa).

A helical transmembrane segment spans residues 9-29 (ATVVLCGSIVTVSIAYVIFVV). A glycan (N-linked (GlcNAc...) asparagine) is linked at N126. Residue C451 participates in heme binding.

It belongs to the cytochrome P450 family. Requires heme as cofactor.

It localises to the membrane. The protein operates within secondary metabolite biosynthesis; terpenoid biosynthesis. In terms of biological role, cytochrome P450 monooxygenase; part of the gene cluster that mediates the biosynthesis of sesquiterpenyl epoxy-cyclohexenoids (SECs) such as anthrobotrisins and arthrosporols, metabolites that possess a novel hybrid carbon skeleton consisting of a polyketide-derived epoxycyclohexenol combined with a terpenoid-derived monocyclic sesquiterpenol substructure (PKS-PTS hybrid). The SEC pathway plays an important role for fungal soil colonization via decreasing fungal nematode-capturing ability. Within the pathway, the cytochrome P450 monooxygenase AOL_s00215g282 acts as a m-cresol hydrolase that converts m-cresol to toluquinol. The pathway begins with the biosynthesis of 6-methylsalicylic acid (6-MSA), the first precursor of the polyketide-derived epoxycyclohexenol in arthrosporols, by the polyketide synthase (PKS) AOL_s00215g283 via condensation of 1 acetate and 3 malonate units. The 6-methylsalicylic acid decarboxylase AOL_s00215g281 then catalyzes the decarboxylation of 6-methylsalicylic acid to yield m-cresol. The cytochrome P450 monooxygenase AOL_s00215g282 further oxidizes m-cresol to yield toluquinol. With the assistance of the oxidoreductase AOL_s00215g277, the polyprenyl transferase AOL_s00215g276 catalyzes the farnesylation of toluquinol to produce farnesyl hydroquinone, the hybrid precursor for biosynthesis of SECs. Farnesyl hydroquinone undergoes epoxidation and then subsequent dehydrogenation to form farnesyl epoxy-quinone, the first and simplest SEC. The cytochrome P450 monooxygenase AOL_s00215g278 and the FAD-dependent monooxygenase AOL_s00215g279 might be involved in the oxygenation of the phenol moiety, most likely in the epoxy formation. The cytochrome P450 monooxygenases AOL_s00215g274 and AOL_s00215g280 are involved in specific regional ketone reductions at respectively C-4 and C-1 of farnesyl epoxy-quinone PubMed:33823587. This chain is Cytochrome P450 monooxygenase AOL_s00215g282, found in Arthrobotrys oligospora (strain ATCC 24927 / CBS 115.81 / DSM 1491) (Nematode-trapping fungus).